A 529-amino-acid polypeptide reads, in one-letter code: Phospholipase A1-Igamma2, chloroplastic (529 aa).

Residues 1–43 (MAAIPSHNNLLTINHKNSITGSSSLNTNFSEINFPAKFRVATR) constitute a chloroplast transit peptide. Residues 316-320 (GHSLG) carry the GXSXG motif. The active-site Acyl-ester intermediate is the serine 318. Active-site charge relay system residues include aspartate 381 and histidine 437.

This sequence belongs to the AB hydrolase superfamily. Lipase family. In terms of assembly, interacts with SBP1. In terms of tissue distribution, widely expressed. Highly expressed in leaves and stems.

It localises to the plastid. The protein resides in the chloroplast. The catalysed reaction is 1,2-dihexadecanoyl-sn-glycero-3-phosphocholine + H2O = 2-hexadecanoyl-sn-glycero-3-phosphocholine + hexadecanoate + H(+). It carries out the reaction a 1,2-diacyl-3-O-(beta-D-galactosyl)-sn-glycerol + H2O = an acyl-3-O-(beta-D-galactosyl)-sn-glycerol + a fatty acid + H(+). It catalyses the reaction a 1,2-diacyl-3-O-[alpha-D-galactosyl-(1-&gt;6)-beta-D-galactosyl]-sn-glycerol + H2O = acyl-3-O-[alpha-D-galactosyl-(1-&gt;6)-beta-D-galactosyl]-sn-glycerol + a fatty acid + H(+). The enzyme catalyses a triacylglycerol + H2O = a diacylglycerol + a fatty acid + H(+). Its function is as follows. Acylhydrolase with broad specificity. Catalyzes the hydrolysis of phosphatidylcholine at the sn-1 position. Possesses moderate activity toward phosphatidylcholine (PC), monogalactosyldiacylglycerol (MGDG), digalactosyldiacylglycerol (DGDG) and triacylglycerol (TAG). In Arabidopsis thaliana (Mouse-ear cress), this protein is Phospholipase A1-Igamma2, chloroplastic.